The primary structure comprises 352 residues: Quinolinate synthase (352 aa).

His48 and Ser69 together coordinate iminosuccinate. Cys114 contributes to the [4Fe-4S] cluster binding site. Residues 140 to 142 (YAN) and Ser157 each bind iminosuccinate. Cys201 serves as a coordination point for [4Fe-4S] cluster. Residues 227–229 (HPE) and Thr244 each bind iminosuccinate. Cys298 contributes to the [4Fe-4S] cluster binding site.

It belongs to the quinolinate synthase family. Type 1 subfamily. [4Fe-4S] cluster is required as a cofactor.

It localises to the cytoplasm. It carries out the reaction iminosuccinate + dihydroxyacetone phosphate = quinolinate + phosphate + 2 H2O + H(+). The protein operates within cofactor biosynthesis; NAD(+) biosynthesis; quinolinate from iminoaspartate: step 1/1. Functionally, catalyzes the condensation of iminoaspartate with dihydroxyacetone phosphate to form quinolinate. In Pseudomonas fluorescens (strain Pf0-1), this protein is Quinolinate synthase.